A 1226-amino-acid polypeptide reads, in one-letter code: Polyamine-transporting ATPase 13A3 (1226 aa).

The Cytoplasmic portion of the chain corresponds to 1–28; the sequence is MDKEERKIINQGQEDEMEIYGYNLSRWK. Residues 29-49 lie within the membrane without spanning it; sequence LAIVSLGVICTGGFLLLLLYW. Residues 50–205 lie on the Cytoplasmic side of the membrane; that stretch reads MPEWRVKATC…IAVKVPSVFK (156 aa). Phosphoserine is present on S98. The helical transmembrane segment at 206–226 threads the bilayer; that stretch reads LLIKEVLNPFYIFQLFSVILW. Residues 227 to 232 are Lumenal-facing; the sequence is STDEYY. A helical transmembrane segment spans residues 233-253; sequence YYALAIVVMSIVSIVSSLYSI. Residues 254–409 lie on the Cytoplasmic side of the membrane; the sequence is RKQYVMLHDM…KPTDFKLYRD (156 aa). A helical membrane pass occupies residues 410–430; that stretch reads AYLFLLCLVAVAGIGFIYTII. The Lumenal segment spans residues 431–448; sequence NSILNEVQVGVIIIESLD. Residues 449–469 form a helical membrane-spanning segment; the sequence is IITITVPPALPAAMTAGIVYA. Residues 470-940 are Cytoplasmic-facing; it reads QRRLKKIGIF…ALITSFCVFK (471 aa). Residue D498 is the 4-aspartylphosphate intermediate of the active site. Mg(2+) is bound by residues D498 and T500. ATP is bound by residues 498–500, F628, R684, and D750; that span reads DKT. Phosphoserine is present on S817. A Mg(2+)-binding site is contributed by D883. Residue 883-887 coordinates ATP; it reads DGAND. Residues 941 to 961 traverse the membrane as a helical segment; it reads FMALYSIIQYFSVTLLYSILS. Position 962 (N962) is a topological domain, lumenal. Residues 963–983 traverse the membrane as a helical segment; that stretch reads LGDFQFLFIDLAIILVVVFTM. The Cytoplasmic segment spans residues 984 to 999; sequence SLNPAWKELVAQRPPS. Residues 1000 to 1020 form a helical membrane-spanning segment; sequence GLISGALLFSVLSQIIICIGF. Over 1021–1073 the chain is Lumenal; it reads QSLGFFWVKQQPWYEVWHPKSDACNATGSLLWNSSHLDNETELDEHNIQNYEN. The chain crosses the membrane as a helical span at residues 1074 to 1094; it reads TTVFFISSFQYLIVAIAFSKG. Topologically, residues 1095–1105 are cytoplasmic; it reads KPFRQPCYKNY. A helical membrane pass occupies residues 1106 to 1126; sequence FFVFSVIFLYVFILFIMLYPV. At 1127 to 1143 the chain is on the lumenal side; that stretch reads ASVDQVLQIVCVPYQWR. The helical transmembrane segment at 1144–1164 threads the bilayer; that stretch reads VTMLIIVLVNAFVSITVEESV. Over 1165 to 1226 the chain is Cytoplasmic; that stretch reads DRWRKCCLPW…NGSCQIITIT (62 aa).

It belongs to the cation transport ATPase (P-type) (TC 3.A.3) family. Type V subfamily.

It localises to the recycling endosome membrane. The protein localises to the early endosome membrane. It is found in the late endosome membrane. The catalysed reaction is putrescine(out) + ATP + H2O = putrescine(in) + ADP + phosphate + H(+). Its function is as follows. ATP-driven pump involved in endocytosis-dependent polyamine transport. Uses ATP as an energy source to transfer polyamine precursor putrescine from the endosomal compartment to the cytosol. In Macaca fascicularis (Crab-eating macaque), this protein is Polyamine-transporting ATPase 13A3 (ATP13A3).